Here is a 628-residue protein sequence, read N- to C-terminus: Patulin synthase (628 aa).

Positions 1–19 (MRLTSGIFHAAIAVAAVGA) are cleaved as a signal peptide. A glycan (N-linked (GlcNAc...) asparagine) is linked at asparagine 49. FAD-binding positions include 61 to 62 (TA) and 82 to 83 (EA). Asparagine 93 carries N-linked (GlcNAc...) asparagine glycosylation. 148 to 151 (NYMA) serves as a coordination point for FAD. N-linked (GlcNAc...) asparagine glycosylation is found at asparagine 198, asparagine 261, asparagine 283, asparagine 429, asparagine 486, and asparagine 526. Histidine 564 functions as the Proton acceptor in the catalytic mechanism. N-linked (GlcNAc...) asparagine glycosylation occurs at asparagine 575. Residues alanine 598 and 609–610 (PQ) each bind FAD.

Belongs to the GMC oxidoreductase family. Requires FAD as cofactor.

The protein localises to the cytoplasm. It localises to the cell cortex. It is found in the vacuole. Its subcellular location is the secreted. The protein resides in the cell wall. It carries out the reaction (E)-ascladiol + A = patulin + AH2. It functions in the pathway mycotoxin biosynthesis; patulin biosynthesis. Its function is as follows. Patulin synthase; part of the gene cluster that mediates the biosynthesis of patulin, an acetate-derived tetraketide mycotoxin produced by several fungal species that shows antimicrobial properties against several bacteria. PatE catalyzes the last step of the pathway which is the conversion of E-ascladiol to patulin. The pathway begins with the synthesis of 6-methylsalicylic acid by the polyketide synthase (PKS) patK via condensation of acetate and malonate units. The 6-methylsalicylic acid decarboxylase patG then catalyzes the decarboxylation of 6-methylsalicylic acid to yield m-cresol (also known as 3-methylphenol). These first reactions occur in the cytosol. The intermediate m-cresol is then transported into the endoplasmic reticulum where the cytochrome P450 monooxygenase patH converts it to m-hydroxybenzyl alcohol, which is further converted to gentisyl alcohol by the cytochrome P450 monooxygenase patI. The oxidoreductases patJ and patO further convert gentisyl alcohol to isoepoxydon in the vacuole. PatN catalyzes then the transformation of isoepoxydon into phyllostine. The cluster protein patF is responsible for the conversion from phyllostine to neopatulin whereas the alcohol dehydrogenase patD converts neopatulin to E-ascladiol. The steps between isoepoxydon and E-ascladiol occur in the cytosol, and E-ascladiol is probably secreted to the extracellular space by one of the cluster-specific transporters patC or patM. Finally, the secreted patulin synthase patE catalyzes the conversion of E-ascladiol to patulin. The chain is Patulin synthase from Penicillium expansum (Blue mold rot fungus).